Here is a 445-residue protein sequence, read N- to C-terminus: MKNNKIYIKTWGCQMNEYDSALITQILKQKHGYENTKDPKLANVLILNTCSIREKAQEKVFHQLGRWKKLKQKNPNLIIAVGGCVATQEGKNIYKRANYVDIIFGTQTLHYLPNMIQEVKKNKKSVTNIDFPLTEKFNFIEYPRKPKVTAFVSIMEGCNKFCSFCIVPYTRGHEISRPVDDILLEISTLSSRGVKEIHLLGQNVNSYKGKTFNGDICKFSNLLRLVASIDGIDRIRFTTSNPFEFTDDIIEIYAEIPKIVSFLHLPVQSGSNRILQLMKRMHTIDEYKTIINKILKLRPNIQISSDFIIGFPGETLIDFEQTLQLIKDLNIDMSYSFIYSPRPGTPASELQDNVTLCEKQKRLHILQTLIRNNTTMWNQKMLGSIQSVLVEGRSQKNPKELFGRTENNRIVNFKGNQNMIGEFINLKITKINPNSLRGSYEKRNN.

The MTTase N-terminal domain occupies 4–121; the sequence is NKIYIKTWGC…LPNMIQEVKK (118 aa). C13, C50, C84, C158, C162, and C165 together coordinate [4Fe-4S] cluster. Residues 144–376 enclose the Radical SAM core domain; it reads RKPKVTAFVS…QTLIRNNTTM (233 aa). The region spanning 379–442 is the TRAM domain; that stretch reads QKMLGSIQSV…PNSLRGSYEK (64 aa).

Belongs to the methylthiotransferase family. MiaB subfamily. In terms of assembly, monomer. Requires [4Fe-4S] cluster as cofactor.

The protein localises to the cytoplasm. It catalyses the reaction N(6)-dimethylallyladenosine(37) in tRNA + (sulfur carrier)-SH + AH2 + 2 S-adenosyl-L-methionine = 2-methylsulfanyl-N(6)-dimethylallyladenosine(37) in tRNA + (sulfur carrier)-H + 5'-deoxyadenosine + L-methionine + A + S-adenosyl-L-homocysteine + 2 H(+). Its function is as follows. Catalyzes the methylthiolation of N6-(dimethylallyl)adenosine (i(6)A), leading to the formation of 2-methylthio-N6-(dimethylallyl)adenosine (ms(2)i(6)A) at position 37 in tRNAs that read codons beginning with uridine. The chain is tRNA-2-methylthio-N(6)-dimethylallyladenosine synthase from Buchnera aphidicola subsp. Baizongia pistaciae (strain Bp).